The primary structure comprises 89 residues: uncharacterized protein (89 aa).

Residues 1-89 (MEKYEKAAEI…KEIIKLVDEL (89 aa)) enclose the HTH arsR-type domain.

This is an uncharacterized protein from Methanocaldococcus jannaschii (strain ATCC 43067 / DSM 2661 / JAL-1 / JCM 10045 / NBRC 100440) (Methanococcus jannaschii).